Reading from the N-terminus, the 315-residue chain is Methionyl-tRNA formyltransferase (315 aa).

112 to 115 (SLLP) provides a ligand contact to (6S)-5,6,7,8-tetrahydrofolate.

The protein belongs to the Fmt family.

It carries out the reaction L-methionyl-tRNA(fMet) + (6R)-10-formyltetrahydrofolate = N-formyl-L-methionyl-tRNA(fMet) + (6S)-5,6,7,8-tetrahydrofolate + H(+). Functionally, attaches a formyl group to the free amino group of methionyl-tRNA(fMet). The formyl group appears to play a dual role in the initiator identity of N-formylmethionyl-tRNA by promoting its recognition by IF2 and preventing the misappropriation of this tRNA by the elongation apparatus. This chain is Methionyl-tRNA formyltransferase, found in Leptospira interrogans serogroup Icterohaemorrhagiae serovar copenhageni (strain Fiocruz L1-130).